We begin with the raw amino-acid sequence, 357 residues long: S-adenosylmethionine decarboxylase proenzyme (357 aa).

Residues E11 and E14 contribute to the active site. Residue S71 is the Schiff-base intermediate with substrate; via pyruvic acid of the active site. Pyruvic acid (Ser); by autocatalysis is present on S71. C85 serves as the catalytic Proton donor; for catalytic activity. Active-site proton acceptor; for processing activity residues include S234 and H247.

Belongs to the eukaryotic AdoMetDC family. Pyruvate is required as a cofactor. Post-translationally, is synthesized initially as an inactive proenzyme. Formation of the active enzyme involves a self-maturation process in which the active site pyruvoyl group is generated from an internal serine residue via an autocatalytic post-translational modification. Two non-identical subunits are generated from the proenzyme in this reaction, and the pyruvate is formed at the N-terminus of the alpha chain, which is derived from the carboxyl end of the proenzyme. The post-translation cleavage follows an unusual pathway, termed non-hydrolytic serinolysis, in which the side chain hydroxyl group of the serine supplies its oxygen atom to form the C-terminus of the beta chain, while the remainder of the serine residue undergoes an oxidative deamination to produce ammonia and the pyruvoyl group blocking the N-terminus of the alpha chain.

The enzyme catalyses S-adenosyl-L-methionine + H(+) = S-adenosyl 3-(methylsulfanyl)propylamine + CO2. It participates in amine and polyamine biosynthesis; S-adenosylmethioninamine biosynthesis; S-adenosylmethioninamine from S-adenosyl-L-methionine: step 1/1. This is S-adenosylmethionine decarboxylase proenzyme (SAMDC) from Catharanthus roseus (Madagascar periwinkle).